Here is a 123-residue protein sequence, read N- to C-terminus: Large ribosomal subunit protein uL14 (123 aa).

The protein belongs to the universal ribosomal protein uL14 family. Part of the 50S ribosomal subunit. Forms a cluster with proteins L3 and L19. In the 70S ribosome, L14 and L19 interact and together make contacts with the 16S rRNA in bridges B5 and B8.

In terms of biological role, binds to 23S rRNA. Forms part of two intersubunit bridges in the 70S ribosome. The polypeptide is Large ribosomal subunit protein uL14 (Escherichia coli O139:H28 (strain E24377A / ETEC)).